Reading from the N-terminus, the 1107-residue chain is Rho GTPase-activating protein 39 (1107 aa).

The segment at 1–21 (MSQAQDYECRSHHVDEQEPRI) is disordered. Serine 2 is modified (N-acetylserine). Over residues 7–19 (YECRSHHVDEQEP) the composition is skewed to basic and acidic residues. WW domains lie at 25-58 (STRL…PPAG) and 63-97 (RTSE…RPQN). The segment covering 111–122 (QNTESPRASADN) has biased composition (polar residues). Disordered regions lie at residues 111–173 (QNTE…PPGV), 218–267 (PSFL…PERR), 282–311 (SPLL…LYEE), and 326–370 (MDVQ…LMRT). Positions 123–136 (SPGRGSRDGSTGSS) are enriched in low complexity. Residues 242–254 (SGSQHSPNLQTFV) are compositionally biased toward polar residues. Phosphoserine is present on serine 282. Polar residues-rich tracts occupy residues 331 to 343 (EANS…SPQR) and 353 to 369 (LQTT…QLMR). Serine 380, serine 384, serine 402, and serine 403 each carry phosphoserine. 3 disordered regions span residues 404–429 (PKLR…QPSP), 441–529 (SGDY…RASL), and 563–585 (MKQR…GAVP). A compositionally biased stretch (polar residues) spans 470 to 484 (SWSSQQDTMSSTGYS). Serine 597, serine 683, serine 708, and serine 719 each carry phosphoserine. The MyTH4 domain maps to 715 to 867 (WSSESIKKPM…PYVEEPDGVA (153 aa)). Positions 914–1102 (SALQEVMSMQ…VLIQHLDTSF (189 aa)) constitute a Rho-GAP domain.

It localises to the nucleus. This chain is Rho GTPase-activating protein 39 (Arhgap39), found in Mus musculus (Mouse).